The sequence spans 681 residues: Terpene synthase 6, chloroplastic (681 aa).

4 residues coordinate Mg(2+): Asp433, Asp437, Asn577, and Glu585. The DDXXD motif signature appears at 433 to 437; it reads DDLFD.

Belongs to the terpene synthase family. Mg(2+) is required as a cofactor. As to expression, expressed in leaves.

It is found in the plastid. Its subcellular location is the chloroplast. Its pathway is secondary metabolite biosynthesis; terpenoid biosynthesis. In terms of biological role, may be involved in the biosynthesis of ent-kaurene diterpenoids natural products such as oridonin, miltiradiene, eriocalyxin B and nezukol, known to exhibit antitumor, anti-inflammatory and antibacterial activities. The sequence is that of Terpene synthase 6, chloroplastic from Isodon rubescens (Rabdosia rubescens).